We begin with the raw amino-acid sequence, 439 residues long: Phenylacetate-coenzyme A ligase (439 aa).

It belongs to the phenylacetyl-CoA ligase family. As to quaternary structure, monomer.

It carries out the reaction 2-phenylacetate + ATP + CoA = phenylacetyl-CoA + AMP + diphosphate. It functions in the pathway aromatic compound metabolism; phenylacetate degradation. Inhibited by divalent cations (zinc, copper, mercury) and by the sulfhydryl reagents 5,5-dithiobis(2-nitrobenzoic acid), N-ethylmaleimide and p-chloromercuribenzoate. Catalyzes the activation of phenylacetic acid (PA) to phenylacetyl-CoA (PA-CoA). Involved in the phenylalanine metabolism. Can also use CTP and UTP as substrate. The sequence is that of Phenylacetate-coenzyme A ligase (paaK) from Pseudomonas putida (Arthrobacter siderocapsulatus).